The chain runs to 1312 residues: Kinesin-like protein KIF16B (1312 aa).

A Kinesin motor domain is found at 3–358 (SVKVAVRVRP…LRYANRAKNI (356 aa)). An ATP-binding site is contributed by 102-109 (GQTGSGKS). Residues 366 to 425 (EDANVKLIRELRAEIARLKTLLAQGNQIALLDSPTALSMEEKLHQNEARVQELTKEWTNK) are a coiled coil. A Phosphoserine modification is found at S398. An FHA domain is found at 480–544 (VGREDASTEQ…LNQGAVILLG (65 aa)). At T577 the chain carries Phosphothreonine. S582, S838, S1047, and S1145 each carry phosphoserine. Coiled-coil stretches lie at residues 835–913 (KLAS…LQNH) and 941–1073 (QVEK…KQKI). The PX domain occupies 1177-1291 (DPIKISIPRY…KVGLTLSKHT (115 aa)).

It belongs to the TRAFAC class myosin-kinesin ATPase superfamily. Kinesin family. As to quaternary structure, interacts with PTPN21. Interacts with RAB14.

The protein localises to the cytoplasm. It localises to the cytoskeleton. The protein resides in the early endosome membrane. Its subcellular location is the spindle. Plus end-directed microtubule-dependent motor protein involved in endosome transport and receptor recycling and degradation. Regulates the plus end motility of early endosomes and the balance between recycling and degradation of receptors such as EGF receptor (EGFR) and FGF receptor (FGFR). Regulates the Golgi to endosome transport of FGFR-containing vesicles during early development, a key process for developing basement membrane and epiblast and primitive endoderm lineages during early postimplantation development. The sequence is that of Kinesin-like protein KIF16B (Kif16b) from Mus musculus (Mouse).